A 133-amino-acid polypeptide reads, in one-letter code: MEKTLGLHILADLYGVDFEKIDHVEDVKALLEGAVKYANLSKLSSHFHQFNPHGATGVILLEESHISIHTWPEHGYAAIDVYTCGGKEKTFKAMEYIIKTLKPKRIDEKIAERGVVPVNPEGVNIEKMQLAQV.

Serine 64 (schiff-base intermediate with substrate; via pyruvic acid) is an active-site residue. Position 64 is a pyruvic acid (Ser); by autocatalysis (serine 64). Histidine 69 functions as the Proton acceptor; for processing activity in the catalytic mechanism. The active-site Proton donor; for catalytic activity is the cysteine 84.

It belongs to the prokaryotic AdoMetDC family. Type 1 subfamily. As to quaternary structure, heterotetramer of two alpha and two beta chains arranged as a dimer of alpha/beta heterodimers. Pyruvate is required as a cofactor. In terms of processing, is synthesized initially as an inactive proenzyme. Formation of the active enzyme involves a self-maturation process in which the active site pyruvoyl group is generated from an internal serine residue via an autocatalytic post-translational modification. Two non-identical subunits are generated from the proenzyme in this reaction, and the pyruvate is formed at the N-terminus of the alpha chain, which is derived from the carboxyl end of the proenzyme. The post-translation cleavage follows an unusual pathway, termed non-hydrolytic serinolysis, in which the side chain hydroxyl group of the serine supplies its oxygen atom to form the C-terminus of the beta chain, while the remainder of the serine residue undergoes an oxidative deamination to produce ammonia and the pyruvoyl group blocking the N-terminus of the alpha chain.

The catalysed reaction is S-adenosyl-L-methionine + H(+) = S-adenosyl 3-(methylsulfanyl)propylamine + CO2. The protein operates within amine and polyamine biosynthesis; S-adenosylmethioninamine biosynthesis; S-adenosylmethioninamine from S-adenosyl-L-methionine: step 1/1. Functionally, catalyzes the decarboxylation of S-adenosylmethionine to S-adenosylmethioninamine (dcAdoMet), the propylamine donor required for the synthesis of the polyamines spermine and spermidine from the diamine putrescine. The sequence is that of S-adenosylmethionine decarboxylase proenzyme from Sulfurihydrogenibium sp. (strain YO3AOP1).